The following is a 493-amino-acid chain: UDP-N-acetylmuramoyl-L-alanyl-D-glutamate--2,6-diaminopimelate ligase (493 aa).

Ser-31 contacts UDP-N-acetyl-alpha-D-muramoyl-L-alanyl-D-glutamate. An ATP-binding site is contributed by Gly-111–Thr-117. Residues Asn-152, Thr-153–Thr-154, Ser-180, and Arg-188 each bind UDP-N-acetyl-alpha-D-muramoyl-L-alanyl-D-glutamate. Lys-220 carries the N6-carboxylysine modification. Meso-2,6-diaminopimelate is bound by residues Arg-386, Asp-410 to Arg-413, Gly-462, and Glu-466. The short motif at Asp-410–Arg-413 is the Meso-diaminopimelate recognition motif element.

This sequence belongs to the MurCDEF family. MurE subfamily. Requires Mg(2+) as cofactor. In terms of processing, carboxylation is probably crucial for Mg(2+) binding and, consequently, for the gamma-phosphate positioning of ATP.

Its subcellular location is the cytoplasm. The catalysed reaction is UDP-N-acetyl-alpha-D-muramoyl-L-alanyl-D-glutamate + meso-2,6-diaminopimelate + ATP = UDP-N-acetyl-alpha-D-muramoyl-L-alanyl-gamma-D-glutamyl-meso-2,6-diaminopimelate + ADP + phosphate + H(+). It participates in cell wall biogenesis; peptidoglycan biosynthesis. Catalyzes the addition of meso-diaminopimelic acid to the nucleotide precursor UDP-N-acetylmuramoyl-L-alanyl-D-glutamate (UMAG) in the biosynthesis of bacterial cell-wall peptidoglycan. This chain is UDP-N-acetylmuramoyl-L-alanyl-D-glutamate--2,6-diaminopimelate ligase (murE1), found in Oceanobacillus iheyensis (strain DSM 14371 / CIP 107618 / JCM 11309 / KCTC 3954 / HTE831).